Reading from the N-terminus, the 277-residue chain is Undecaprenyl-diphosphatase (277 aa).

6 helical membrane-spanning segments follow: residues Phe47–Ile67, Ala85–Ile105, Trp108–Trp128, Ala183–Ser203, Val218–Leu238, and Phe249–Ile269.

Belongs to the UppP family.

It is found in the cell inner membrane. The catalysed reaction is di-trans,octa-cis-undecaprenyl diphosphate + H2O = di-trans,octa-cis-undecaprenyl phosphate + phosphate + H(+). In terms of biological role, catalyzes the dephosphorylation of undecaprenyl diphosphate (UPP). Confers resistance to bacitracin. The sequence is that of Undecaprenyl-diphosphatase from Pseudomonas aeruginosa (strain UCBPP-PA14).